A 160-amino-acid chain; its full sequence is MVKFALQFKASLENLTQLRPHGEDFRWFLKLKCGNCGEVSDKWQYITLMDSVPLKGGRGSASMVQRCKLCSRENSIDILAASLHPYNAEDSETFKTIVEFECRGLEPIDFQPQAGFAAEGAETGTPFHEINLQEKDWTDYDEKAKESVGIYEVEHRFTKC.

Zn(2+)-binding residues include cysteine 33, cysteine 36, cysteine 67, and cysteine 70.

This sequence belongs to the UPF0587 family.

The sequence is that of CXXC motif containing zinc binding protein (czib) from Xenopus laevis (African clawed frog).